A 193-amino-acid polypeptide reads, in one-letter code: Ubiquitin-conjugating enzyme E2 E1 (193 aa).

The disordered stretch occupies residues 1-45; it reads MSDDDSRASTSSSSSSSSNQQTEKEGSTPKKKESKVSMSKNSKLL. At Ser-2 the chain carries N-acetylserine. The segment covering 8 to 18 has biased composition (low complexity); the sequence is ASTSSSSSSSS. Over residues 22-35 the composition is skewed to basic and acidic residues; the sequence is TEKEGSTPKKKESK. A compositionally biased stretch (polar residues) spans 36-45; sequence VSMSKNSKLL. The UBC core domain maps to 47–193; sequence TSAKRIQKEL…ARQWTKRYAT (147 aa). The active-site Glycyl thioester intermediate is the Cys-131. Residue Lys-136 forms a Glycyl lysine isopeptide (Lys-Gly) (interchain with G-Cter in ISG15) linkage.

This sequence belongs to the ubiquitin-conjugating enzyme family. In terms of assembly, interacts with RNF14. In terms of processing, ISGylation suppresses ubiquitin E2 enzyme activity. Post-translationally, autoubiquitinated.

The protein resides in the nucleus. It catalyses the reaction S-ubiquitinyl-[E1 ubiquitin-activating enzyme]-L-cysteine + [E2 ubiquitin-conjugating enzyme]-L-cysteine = [E1 ubiquitin-activating enzyme]-L-cysteine + S-ubiquitinyl-[E2 ubiquitin-conjugating enzyme]-L-cysteine.. The enzyme catalyses S-ubiquitinyl-[E1 ubiquitin-activating enzyme]-L-cysteine + [acceptor protein]-L-lysine = [E1 ubiquitin-activating enzyme]-L-cysteine + N(6)-monoubiquitinyl-[acceptor protein]-L-lysine.. It functions in the pathway protein modification; protein ubiquitination. In terms of biological role, accepts ubiquitin from the E1 complex and catalyzes its covalent attachment to other proteins. Catalyzes the covalent attachment of ISG15 to other proteins. Mediates the selective degradation of short-lived and abnormal proteins. In vitro also catalyzes 'Lys-48'-linked polyubiquitination. This Mus musculus (Mouse) protein is Ubiquitin-conjugating enzyme E2 E1 (Ube2e1).